The sequence spans 315 residues: Solute carrier family 25 member 32 (315 aa).

3 Solcar repeats span residues 20–109 (HVRY…IKSY), 118–209 (LEAT…LKLK), and 222–306 (LSTV…VSHF). 6 consecutive transmembrane segments (helical) span residues 26 to 43 (LIAG…LHPL), 89 to 106 (IWGA…YNAI), 123 to 143 (YLVS…PLWV), 186 to 203 (FVPG…FMAY), 227 to 243 (YISV…AATY), and 281 to 300 (GIAP…FVVY).

It belongs to the mitochondrial carrier (TC 2.A.29) family. Ubiquitous.

It is found in the mitochondrion inner membrane. It catalyses the reaction FAD(in) = FAD(out). Its function is as follows. Facilitates flavin adenine dinucleotide (FAD) translocation across the mitochondrial inner membrane into the mitochondrial matrix where it acts as a redox cofactor to assist flavoenzyme activities in fundamental metabolic processes including fatty acid beta-oxidation, amino acid and choline metabolism as well as mitochondrial electron transportation. In particular, provides FAD to DLD dehydrogenase of the glycine cleavage system, part of mitochondrial one-carbon metabolic pathway involved in neural tube closure in early embryogenesis. The sequence is that of Solute carrier family 25 member 32 from Homo sapiens (Human).